We begin with the raw amino-acid sequence, 473 residues long: Probable aspartokinase (473 aa).

ACT domains lie at 323–392 and 409–473; these read IFGA…FLNN and VVGA…KTNS.

It belongs to the aspartokinase family.

It catalyses the reaction L-aspartate + ATP = 4-phospho-L-aspartate + ADP. It functions in the pathway amino-acid biosynthesis; L-lysine biosynthesis via DAP pathway; (S)-tetrahydrodipicolinate from L-aspartate: step 1/4. Its pathway is amino-acid biosynthesis; L-methionine biosynthesis via de novo pathway; L-homoserine from L-aspartate: step 1/3. It participates in amino-acid biosynthesis; L-threonine biosynthesis; L-threonine from L-aspartate: step 1/5. This chain is Probable aspartokinase, found in Methanocaldococcus jannaschii (strain ATCC 43067 / DSM 2661 / JAL-1 / JCM 10045 / NBRC 100440) (Methanococcus jannaschii).